The chain runs to 105 residues: Insulin (105 aa).

A signal peptide spans 1–24 (MALWTRLRPLLALLALWPPPPARA). 3 cysteine pairs are disulfide-bonded: C31–C91, C43–C104, and C90–C95. Positions 57–82 (EVEGPQVGALELAGGPGAGGLEGPPQ) are cleaved as a propeptide — c peptide.

The protein belongs to the insulin family. In terms of assembly, heterodimer of a B chain and an A chain linked by two disulfide bonds.

The protein localises to the secreted. In terms of biological role, insulin decreases blood glucose concentration. It increases cell permeability to monosaccharides, amino acids and fatty acids. It accelerates glycolysis, the pentose phosphate cycle, and glycogen synthesis in liver. The sequence is that of Insulin (INS) from Bos taurus (Bovine).